A 310-amino-acid chain; its full sequence is Isoaspartyl peptidase/L-asparaginase (310 aa).

Thr-167 acts as the Nucleophile in catalysis. Substrate-binding positions include 195–198 (RVGD) and 218–221 (TGHG).

This sequence belongs to the Ntn-hydrolase family. As to quaternary structure, heterodimer of an alpha and beta chain produced by autocleavage. Post-translationally, cleaved into an alpha and beta chain by autocatalysis; this activates the enzyme. The N-terminal residue of the beta subunit is responsible for the nucleophile hydrolase activity.

It localises to the cytoplasm. It carries out the reaction L-asparagine + H2O = L-aspartate + NH4(+). The catalysed reaction is Cleavage of a beta-linked Asp residue from the N-terminus of a polypeptide.. In terms of biological role, has both L-asparaginase and beta-aspartyl peptidase activity. Does not have aspartylglucosaminidase activity and is inactive toward GlcNAc-L-Asn. Likewise, has no activity toward glutamine. The chain is Isoaspartyl peptidase/L-asparaginase (asrgl1) from Danio rerio (Zebrafish).